Reading from the N-terminus, the 485-residue chain is Signal recognition particle protein (485 aa).

GTP is bound by residues 107 to 114 (GLQGAGKT), 189 to 193 (DTAGR), and 247 to 250 (TKLD). The disordered stretch occupies residues 452-485 (GFGGGAPAPQPGFRGYGPPKKQKKGSKKKKGFGL). Positions 471 to 485 (KKQKKGSKKKKGFGL) are enriched in basic residues.

The protein belongs to the GTP-binding SRP family. SRP54 subfamily. As to quaternary structure, part of the signal recognition particle protein translocation system, which is composed of SRP and FtsY.

It is found in the cytoplasm. It carries out the reaction GTP + H2O = GDP + phosphate + H(+). Functionally, involved in targeting and insertion of nascent membrane proteins into the cytoplasmic membrane. Binds to the hydrophobic signal sequence of the ribosome-nascent chain (RNC) as it emerges from the ribosomes. The SRP-RNC complex is then targeted to the cytoplasmic membrane where it interacts with the SRP receptor FtsY. In Synechococcus elongatus (strain ATCC 33912 / PCC 7942 / FACHB-805) (Anacystis nidulans R2), this protein is Signal recognition particle protein.